The primary structure comprises 473 residues: MMSKINQTDIDRLIELVGGRGNIATVSHCITRLRFVLNQPANARPKEIEQLPMVKGCFTNAGQFQVVIGTNVGDYYQALIASTGQAQVDKEQVKKAARHNMKWHEQLISHFAVIFFPLLPALISGGLILGFRNVIGDLPMSNGQTLAQMYPSLQTIYDFLWLIGEAIFFYLPVGICWSAVKKMGGTPILGIVLGVTLVSPQLMNAYLLGQQLPEVWDFGMFSIAKVGYQAQVIPALLAGLALGVIETRLKRIVPDYLYLVVVPVCSLILAVFLAHALIGPFGRMIGDGVAFAVRHLMTGSFAPIGAALFGFLYAPLVITGVHQTTLAIDLQMIQSMGGTPVWPLIALSNIAQGSAVIGIIISSRKHNEREISVPAAISAWLGVTEPAMYGINLKYRFPMLCAMIGSGLAGLLCGLNGVMANGIGVGGLPGILSIQPSYWQVFALAMAIAIIIPIVLTSFIYQRKYRLGTLDIV.

A PTS EIIB type-1 domain is found at 1-89; it reads MMSKINQTDI…IASTGQAQVD (89 aa). Residues 1–110 are Cytoplasmic-facing; sequence MMSKINQTDI…MKWHEQLISH (110 aa). The active-site Phosphocysteine intermediate; for EIIB activity is Cys29. Cys29 is subject to Phosphocysteine; by EIIA. The 365-residue stretch at 109 to 473 folds into the PTS EIIC type-1 domain; that stretch reads SHFAVIFFPL…KYRLGTLDIV (365 aa). A helical membrane pass occupies residues 111–131; sequence FAVIFFPLLPALISGGLILGF. The Periplasmic segment spans residues 132–158; it reads RNVIGDLPMSNGQTLAQMYPSLQTIYD. Residues 159 to 179 traverse the membrane as a helical segment; sequence FLWLIGEAIFFYLPVGICWSA. Topologically, residues 180-187 are cytoplasmic; sequence VKKMGGTP. The helical transmembrane segment at 188 to 208 threads the bilayer; sequence ILGIVLGVTLVSPQLMNAYLL. Topologically, residues 209-225 are periplasmic; it reads GQQLPEVWDFGMFSIAK. Residues 226 to 246 form a helical membrane-spanning segment; that stretch reads VGYQAQVIPALLAGLALGVIE. At 247-258 the chain is on the cytoplasmic side; sequence TRLKRIVPDYLY. A helical transmembrane segment spans residues 259–279; that stretch reads LVVVPVCSLILAVFLAHALIG. Residues 280–300 lie on the Periplasmic side of the membrane; sequence PFGRMIGDGVAFAVRHLMTGS. Residues 301–321 form a helical membrane-spanning segment; the sequence is FAPIGAALFGFLYAPLVITGV. Over 322-340 the chain is Cytoplasmic; it reads HQTTLAIDLQMIQSMGGTP. A helical transmembrane segment spans residues 341–361; that stretch reads VWPLIALSNIAQGSAVIGIII. Over 362 to 370 the chain is Periplasmic; sequence SSRKHNERE. The chain crosses the membrane as a helical span at residues 371–391; sequence ISVPAAISAWLGVTEPAMYGI. At 392-398 the chain is on the cytoplasmic side; the sequence is NLKYRFP. A helical membrane pass occupies residues 399–419; it reads MLCAMIGSGLAGLLCGLNGVM. Residues 420 to 440 lie on the Periplasmic side of the membrane; the sequence is ANGIGVGGLPGILSIQPSYWQ. A helical membrane pass occupies residues 441–461; that stretch reads VFALAMAIAIIIPIVLTSFIY. The Cytoplasmic portion of the chain corresponds to 462–473; it reads QRKYRLGTLDIV.

The protein localises to the cell inner membrane. It carries out the reaction alpha,alpha-trehalose(out) + N(pros)-phospho-L-histidyl-[protein] = alpha,alpha-trehalose 6-phosphate(in) + L-histidyl-[protein]. In terms of biological role, the phosphoenolpyruvate-dependent sugar phosphotransferase system (sugar PTS), a major carbohydrate active transport system, catalyzes the phosphorylation of incoming sugar substrates concomitantly with their translocation across the cell membrane. This system is involved in trehalose transport at low osmolarity. In Escherichia coli (strain K12), this protein is PTS system trehalose-specific EIIBC component (treB).